The chain runs to 347 residues: MEFCVLFGGASFEHEISIVSAIALKGVLKDRIKYFIFLDENHYFYLIEESNMHSKYFAQIKEKKLPPLILTHNGLLKNSFLGAKIIELPLVINLVHGGDGEDGKLASLLEFYRIAFIGPRVEASVLSYNKYLTKLYAKDLGVKALDYVLLNEKNRANALDLIGFNFPFIVKPSNAGSSLGVNVVKEEKELIYALDSAFEYSKEVLIEPFIQGVKEYNLAGCKIKKGFCFSYVEEPNKQEFLDFKQKYLDFSRTKAPKANLSNALEEQLKENFKKLYNDLFDGAIIRCDFFVIENEVYLNEINPIPGSLANYLFDDFKTTLENLAQSLPKTPKIQVKNSYLLQIQKNK.

The region spanning 134–332 (KLYAKDLGVK…LAQSLPKTPK (199 aa)) is the ATP-grasp domain. 161–216 (LIGFNFPFIVKPSNAGSSLGVNVVKEEKELIYALDSAFEYSKEVLIEPFIQGVKEY) contacts ATP. Positions 288, 300, and 302 each coordinate Mg(2+).

It belongs to the D-alanine--D-alanine ligase family. Mg(2+) serves as cofactor. Requires Mn(2+) as cofactor.

It localises to the cytoplasm. The catalysed reaction is 2 D-alanine + ATP = D-alanyl-D-alanine + ADP + phosphate + H(+). It participates in cell wall biogenesis; peptidoglycan biosynthesis. Its function is as follows. Cell wall formation. This Helicobacter pylori (strain J99 / ATCC 700824) (Campylobacter pylori J99) protein is D-alanine--D-alanine ligase.